Reading from the N-terminus, the 402-residue chain is Phosphoglycerate kinase (402 aa).

Substrate contacts are provided by residues 29 to 31, arginine 45, 69 to 72, arginine 125, and arginine 158; these read DFN and HLGR. ATP contacts are provided by residues lysine 209, glutamate 331, and 357–360; that span reads GGDT.

The protein belongs to the phosphoglycerate kinase family.

It is found in the cytoplasm. The enzyme catalyses (2R)-3-phosphoglycerate + ATP = (2R)-3-phospho-glyceroyl phosphate + ADP. It participates in carbohydrate degradation; glycolysis; pyruvate from D-glyceraldehyde 3-phosphate: step 2/5. The sequence is that of Phosphoglycerate kinase (pgk) from Helicobacter pylori (strain J99 / ATCC 700824) (Campylobacter pylori J99).